Consider the following 341-residue polypeptide: tRNA N6-adenosine threonylcarbamoyltransferase (341 aa).

His111 and His115 together coordinate Fe cation. Substrate-binding positions include 134–138 (LVSGG), Asp167, Gly180, and Asn276. Asp304 provides a ligand contact to Fe cation.

The protein belongs to the KAE1 / TsaD family. Fe(2+) serves as cofactor.

It localises to the cytoplasm. It carries out the reaction L-threonylcarbamoyladenylate + adenosine(37) in tRNA = N(6)-L-threonylcarbamoyladenosine(37) in tRNA + AMP + H(+). In terms of biological role, required for the formation of a threonylcarbamoyl group on adenosine at position 37 (t(6)A37) in tRNAs that read codons beginning with adenine. Is involved in the transfer of the threonylcarbamoyl moiety of threonylcarbamoyl-AMP (TC-AMP) to the N6 group of A37, together with TsaE and TsaB. TsaD likely plays a direct catalytic role in this reaction. The sequence is that of tRNA N6-adenosine threonylcarbamoyltransferase from Pseudomonas aeruginosa (strain ATCC 15692 / DSM 22644 / CIP 104116 / JCM 14847 / LMG 12228 / 1C / PRS 101 / PAO1).